The sequence spans 799 residues: LPS-assembly protein LptD (799 aa).

Positions 1-34 are cleaved as a signal peptide; the sequence is MMHELDLRPHLARFAQRPLALLAWALLQGTSVNA.

It belongs to the LptD family. As to quaternary structure, component of the lipopolysaccharide transport and assembly complex. Interacts with LptE and LptA.

Its subcellular location is the cell outer membrane. Functionally, together with LptE, is involved in the assembly of lipopolysaccharide (LPS) at the surface of the outer membrane. The chain is LPS-assembly protein LptD from Albidiferax ferrireducens (strain ATCC BAA-621 / DSM 15236 / T118) (Rhodoferax ferrireducens).